The following is a 445-amino-acid chain: GTPase Der (445 aa).

2 consecutive EngA-type G domains span residues 2-166 and 182-355; these read FRVA…PEYE and IKVA…NQAW. Residues 8–15, 55–59, 118–121, 188–195, 235–239, and 300–303 each bind GTP; these read GIPNVGKS, DTGGY, NKID, GKPNAGKS, and DTAGM. Residues 356 to 440 form the KH-like domain; it reads KRVGTGQLNR…PIKLIFRGKE (85 aa).

This sequence belongs to the TRAFAC class TrmE-Era-EngA-EngB-Septin-like GTPase superfamily. EngA (Der) GTPase family. In terms of assembly, associates with the 50S ribosomal subunit.

Its function is as follows. GTPase that plays an essential role in the late steps of ribosome biogenesis. This Sulfurihydrogenibium sp. (strain YO3AOP1) protein is GTPase Der.